We begin with the raw amino-acid sequence, 73 residues long: Beta-defensin 40 (73 aa).

Positions 1–23 are cleaved as a signal peptide; the sequence is MKISCFLLMIFFLSCFQINPVAV. 3 disulfides stabilise this stretch: cysteine 29/cysteine 58, cysteine 36/cysteine 51, and cysteine 41/cysteine 59.

This sequence belongs to the beta-defensin family. Only expressed in epididymis (corpus, cauda and caput).

It localises to the secreted. In terms of biological role, has antibacterial activity. The polypeptide is Beta-defensin 40 (Defb40) (Mus musculus (Mouse)).